The primary structure comprises 77 residues: Blood-induced peptide 1 (77 aa).

Residues 38-71 (EDFLHQENSELKKSLKNLEMENEKLKNILKTDYN) are a coiled coil.

Functionally, plays an important role in survival in host blood through increasing tolerance to stresses such as heat, salt, or cycloheximide, which is essential for virulence. This chain is Blood-induced peptide 1, found in Candida albicans (strain SC5314 / ATCC MYA-2876) (Yeast).